Reading from the N-terminus, the 421-residue chain is Inner membrane protein YihN (421 aa).

The Periplasmic segment spans residues 1–44 (MLTKKKWALFSLLTLCGGTIYKLPSLKDAFYIPMQEYFHLTNGQ). The helical transmembrane segment at 45-65 (IGNAMSVNSFVTTVGFFLSIY) threads the bilayer. The Cytoplasmic segment spans residues 66–73 (FADKLPRR). A helical transmembrane segment spans residues 74–91 (YTMSFSLIATGLLGVYLT). At 92–95 (TMPG) the chain is on the periplasmic side. The chain crosses the membrane as a helical span at residues 96-118 (YWGILFVWALFGVTCDMMNWPVL). The Cytoplasmic portion of the chain corresponds to 119–146 (LKSVSRLGNSEQQGRLFGFFETGRGIVD). The helical transmembrane segment at 147–167 (TVVAFSALAVFTWFGSGLLGF) threads the bilayer. Residue Lys168 is a topological domain, periplasmic. A helical membrane pass occupies residues 169 to 189 (AGIWFYSLIVIAVGIIIFFVL). Residues 190-220 (NDKEEAPSVEVKKEDGASKNTSMTSVLKDKT) are Cytoplasmic-facing. 2 helical membrane-spanning segments follow: residues 221-241 (IWLIAFNVFFVYAVYCGLTFF) and 242-262 (IPFLKNIYLLPVALVGAYGII). The Cytoplasmic portion of the chain corresponds to 263-288 (NQYCLKMIGGPIGGMISDKILKSPSK). Transmembrane regions (helical) follow at residues 289–309 (YLCYTFIISTAALVLLIMLPH) and 310–330 (ESMPVYLGMACTLGFGAIVFT). Topologically, residues 331–354 (QRAVFFAPIGEAKIAENKTGAAMA) are cytoplasmic. Residues 355–375 (LGSFIGYAPAMFCFSLYGYIL) form a helical membrane-spanning segment. Residues 376–385 (DLNPGIIGYK) lie on the Periplasmic side of the membrane. A helical membrane pass occupies residues 386–406 (IVFGIMACFAFSGAVVSVMLV). Residues 407-421 (KRISQRKKEMLAAEA) are Cytoplasmic-facing.

Belongs to the major facilitator superfamily.

It is found in the cell inner membrane. This Escherichia coli (strain K12) protein is Inner membrane protein YihN (yihN).